The sequence spans 197 residues: Phosphoheptose isomerase (197 aa).

The SIS domain occupies 36–197 (LVHSLAQGGK…VDSLLLGVEE (162 aa)). Position 51–53 (51–53 (NGG)) interacts with substrate. Zn(2+) contacts are provided by histidine 60 and glutamate 64. Residues glutamate 64, 93–94 (ND), 119–121 (STS), serine 124, and glutamine 174 contribute to the substrate site. Residues glutamine 174 and histidine 182 each coordinate Zn(2+).

Belongs to the SIS family. GmhA subfamily. In terms of assembly, homotetramer. Requires Zn(2+) as cofactor.

The protein resides in the cytoplasm. It carries out the reaction 2 D-sedoheptulose 7-phosphate = D-glycero-alpha-D-manno-heptose 7-phosphate + D-glycero-beta-D-manno-heptose 7-phosphate. It participates in carbohydrate biosynthesis; D-glycero-D-manno-heptose 7-phosphate biosynthesis; D-glycero-alpha-D-manno-heptose 7-phosphate and D-glycero-beta-D-manno-heptose 7-phosphate from sedoheptulose 7-phosphate: step 1/1. Functionally, catalyzes the isomerization of sedoheptulose 7-phosphate in D-glycero-D-manno-heptose 7-phosphate. This is Phosphoheptose isomerase from Thiobacillus denitrificans (strain ATCC 25259 / T1).